The chain runs to 233 residues: Leucyl/phenylalanyl-tRNA--protein transferase (233 aa).

It belongs to the L/F-transferase family.

Its subcellular location is the cytoplasm. It carries out the reaction N-terminal L-lysyl-[protein] + L-leucyl-tRNA(Leu) = N-terminal L-leucyl-L-lysyl-[protein] + tRNA(Leu) + H(+). It catalyses the reaction N-terminal L-arginyl-[protein] + L-leucyl-tRNA(Leu) = N-terminal L-leucyl-L-arginyl-[protein] + tRNA(Leu) + H(+). The enzyme catalyses L-phenylalanyl-tRNA(Phe) + an N-terminal L-alpha-aminoacyl-[protein] = an N-terminal L-phenylalanyl-L-alpha-aminoacyl-[protein] + tRNA(Phe). Functionally, functions in the N-end rule pathway of protein degradation where it conjugates Leu, Phe and, less efficiently, Met from aminoacyl-tRNAs to the N-termini of proteins containing an N-terminal arginine or lysine. The chain is Leucyl/phenylalanyl-tRNA--protein transferase from Klebsiella pneumoniae subsp. pneumoniae (strain ATCC 700721 / MGH 78578).